Here is a 922-residue protein sequence, read N- to C-terminus: Golgi-associated RAB2 interactor protein 5B (922 aa).

Disordered stretches follow at residues 244–264, 292–317, 373–404, 424–597, 758–830, and 842–869; these read DVRK…DRTH, QSSP…SPSH, TPYS…KAPS, AVPA…TQET, QPES…LRPS, and ATAR…LATV. Polar residues predominate over residues 292–305; it reads QSSPKACTSASDEA. Residues 431–441 are compositionally biased toward pro residues; it reads KPPPGLAPPQK. Composition is skewed to low complexity over residues 442-458 and 471-495; these read APAA…VPAP and KAPA…ASAV. Over residues 496 to 507 the composition is skewed to pro residues; the sequence is PAPPQKTPPPSQ. The span at 758–788 shows a compositional bias: basic and acidic residues; the sequence is QPESHTWVKEGKRPWGEMKEQPWGEMKEPPW.

Belongs to the GARIN family.

This chain is Golgi-associated RAB2 interactor protein 5B, found in Homo sapiens (Human).